The primary structure comprises 245 residues: 8-amino-3,8-dideoxy-manno-octulosonate cytidylyltransferase (245 aa).

The protein belongs to the KdsB family.

The protein localises to the cytoplasm. The catalysed reaction is 8-amino-3,8-dideoxy-alpha-D-manno-octulosonate + CTP = CMP-8-amino-3,8-dideoxy-alpha-D-manno-oct-2-ulosonate + diphosphate. Its pathway is bacterial outer membrane biogenesis; lipopolysaccharide biosynthesis. Activates KDO8N (a required 8-carbon sugar) for incorporation into bacterial lipopolysaccharide in the Shewanella genus. This Shewanella baltica (strain OS195) protein is 8-amino-3,8-dideoxy-manno-octulosonate cytidylyltransferase.